Here is a 607-residue protein sequence, read N- to C-terminus: Runt-related transcription factor 2 (607 aa).

Residues 1–88 (MLHSPHKQPQ…TMASNSLFSA (88 aa)) form an interaction with IFI204 region. Low complexity predominate over residues 100-112 (PSTSRRFSPPSSS). Residues 100–126 (PSTSRRFSPPSSSLQPGKMSDVSPVVA) are disordered. Residues 187–315 (TMVEIIADHP…TVDGPREPRR (129 aa)) form the Runt domain. The tract at residues 242 to 258 (VMAGNDENYSAELRNAS) is required for interaction with FOXO1. A disordered region spans residues 307–430 (VDGPREPRRH…VPRRISDDDT (124 aa)). Lys324 is covalently cross-linked (Glycyl lysine isopeptide (Lys-Gly) (interchain with G-Cter in SUMO2)). Arg353 is subject to Asymmetric dimethylarginine. Positions 353 to 412 (RPSLNSAPSPFNPQGQSQITDPRQAQSSPPWSYDQSYPSYLSQMTSPSIHSTTPLSSTRG) are enriched in polar residues. Residues 422–525 (PRRISDDDTA…SQSQSGPFQT (104 aa)) form an interaction with KAT6A region. The interval 460–554 (RQFPSISSLT…VPGGDRSPSR (95 aa)) is interaction with KAT6B. Ser537 is subject to Phosphoserine; by CDK1. Positions 548 to 607 (GDRSPSRMVPPCTTTSNGSTLLNPNLPNQNDGVDADGSHSSSPTVLNSSGRMDESVWRPY) are disordered. Polar residues-rich tracts occupy residues 559-578 (CTTTSNGSTLLNPNLPNQND) and 585-597 (SHSSSPTVLNSSG). Residues 598 to 607 (RMDESVWRPY) are compositionally biased toward basic and acidic residues.

Heterodimer of an alpha and a beta subunit. The alpha subunit binds DNA as a monomer and through the Runt domain. DNA-binding is increased by heterodimerization. Interacts with XRCC6 (Ku70) and XRCC5 (Ku80). Interacts with CCNB1, KAT6A and KAT6B. Interacts with HIVEP3. Interacts with IFI204. Interaction with SATB2; the interaction results in enhanced DNA binding and transactivation by these transcription factors. Binds to HIPK3. Interacts with FOXO1 (via a C-terminal region); the interaction inhibits RUNX2 transcriptional activity towards BGLAP. Interacts with FOXP3. Interacts with TMEM119. Interacts with OLFM2. Interacts with IPO7; the interaction inhibits RUNX2 nuclear translocation in osteoblasts. As to quaternary structure, interacts with DDX5. Post-translationally, phosphorylated; probably by MAP kinases (MAPK). Phosphorylation by HIPK3 is required for the SPEN/MINT and FGF2 transactivation during osteoblastic differentiation. Phosphorylation at Ser-537 by CDK1 promotes endothelial cell proliferation required for tumor angiogenesis probably by facilitating cell cycle progression. In terms of tissue distribution, found in thymus and testis, T-cell lines but not in B-cell lines. Isoform 2 is exclusively found in bone, particularly in osteoblasts; isoforms 3 and 4 are expressed in T-cell lines; isoforms 5, 6, 7, 8 and 9 can be found in osteoblasts and osteosarcoma cell lines.

It is found in the nucleus. Its subcellular location is the cytoplasm. Transcription factor involved in osteoblastic differentiation and skeletal morphogenesis. Essential for the maturation of osteoblasts and both intramembranous and endochondral ossification. CBF binds to the core site, 5'-PYGPYGGT-3', of a number of enhancers and promoters, including murine leukemia virus, polyomavirus enhancer, T-cell receptor enhancers, osteocalcin, osteopontin, bone sialoprotein, alpha 1(I) collagen, LCK, IL-3 and GM-CSF promoters. Inhibits KAT6B-dependent transcriptional activation. In osteoblasts, supports transcription activation: synergizes with SPEN/MINT to enhance FGFR2-mediated activation of the osteocalcin FGF-responsive element (OCFRE). This chain is Runt-related transcription factor 2 (Runx2), found in Mus musculus (Mouse).